A 307-amino-acid chain; its full sequence is 2,4-diacetylphloroglucinol hydrolase (307 aa).

Zn(2+)-binding residues include His-142, Glu-173, His-283, and Glu-287.

This sequence belongs to the DAPG/phloretin hydrolase family. Zn(2+) serves as cofactor.

The catalysed reaction is 2,4-diacetylphloroglucinol + H2O = 2-acetylphloroglucinol + acetate. Activity is strongly reduced by pyoluteorin, an antifungal compound produced by the bacterium. Its function is as follows. Hydrolase that specifically degrades the potent antimicrobial compound 2,4-diacetylphloroglucinol (DAPG) to equimolar amounts of mildly toxic monoacetylphloroglucinol (MAPG) and acetate. Does not degrade other compounds with structures similar to DAPG, such as MAPG and triacetylphloroglucinol, suggesting strict substrate specificity. Degradation of DAPG to MAPG may provide an additional means of fine-tuning levels of this antibiotic or may help avoid accumulation of a metabolite that at high levels may become toxic to the producing bacterium. The sequence is that of 2,4-diacetylphloroglucinol hydrolase from Pseudomonas protegens (strain DSM 19095 / LMG 27888 / CFBP 6595 / CHA0).